Consider the following 281-residue polypeptide: 2-dehydro-3-deoxyphosphooctonate aldolase (281 aa).

Belongs to the KdsA family.

The protein resides in the cytoplasm. It catalyses the reaction D-arabinose 5-phosphate + phosphoenolpyruvate + H2O = 3-deoxy-alpha-D-manno-2-octulosonate-8-phosphate + phosphate. The protein operates within carbohydrate biosynthesis; 3-deoxy-D-manno-octulosonate biosynthesis; 3-deoxy-D-manno-octulosonate from D-ribulose 5-phosphate: step 2/3. It participates in bacterial outer membrane biogenesis; lipopolysaccharide biosynthesis. This chain is 2-dehydro-3-deoxyphosphooctonate aldolase, found in Pseudomonas putida (strain GB-1).